We begin with the raw amino-acid sequence, 380 residues long: Flap endonuclease 1 (380 aa).

The tract at residues 1–104 (MGIQGLAKLI…GELAKRSERR (104 aa)) is N-domain. R19 carries the symmetric dimethylarginine; by PRMT5 modification. Residue D34 coordinates Mg(2+). Positions 47 and 70 each coordinate DNA. K80 is modified (N6-acetyllysine). D86 is a Mg(2+) binding site. A symmetric dimethylarginine; by PRMT5 mark is found at R100 and R104. The tract at residues 122–253 (EVEKFTKRLV…KRAVDLIQKH (132 aa)) is I-domain. 4 residues coordinate Mg(2+): E158, E160, D179, and D181. Residue E158 participates in DNA binding. The residue at position 187 (S187) is a Phosphoserine; by CDK2. A Symmetric dimethylarginine; by PRMT5 modification is found at R192. S197 is subject to Phosphoserine. DNA is bound by residues G231 and D233. D233 is a Mg(2+) binding site. 3 positions are modified to phosphoserine: S255, S293, and S335. The interval 327 to 380 (RLSKSRQGSTQGRLDDFFKVTGSLSSAKRKEPEPKGSTKKKAKTGAAGKFKRGK) is disordered. The residue at position 336 (T336) is a Phosphothreonine. The interaction with PCNA stretch occupies residues 336-344 (TQGRLDDFF). K354 carries the post-translational modification N6-acetyllysine. The segment covering 363 to 380 (STKKKAKTGAAGKFKRGK) has biased composition (basic residues). Residue T364 is modified to Phosphothreonine. An N6-acetyllysine mark is found at K375, K377, and K380.

The protein belongs to the XPG/RAD2 endonuclease family. FEN1 subfamily. Interacts with PCNA. Three molecules of FEN1 bind to one PCNA trimer with each molecule binding to one PCNA monomer. PCNA stimulates the nuclease activity without altering cleavage specificity. The C-terminal domain binds EP300; can bind simultaneously to both PCNA and EP300. Interacts with DDX11; this interaction is direct and increases flap endonuclease activity of FEN1. Interacts with WDR4; regulating its endonuclease activity. Interacts with POLB. Mg(2+) serves as cofactor. In terms of processing, acetylated by EP300. Acetylation inhibits both endonuclease and exonuclease activity. Acetylation also reduces DNA-binding activity but does not affect interaction with PCNA or EP300. Phosphorylation upon DNA damage induces relocalization to the nuclear plasma. Phosphorylation at Ser-187 by CDK2 occurs during late S-phase and results in dissociation from PCNA. Post-translationally, methylation at Arg-192 by PRMT5 impedes Ser-187 phosphorylation and increases interaction with PCNA.

The protein localises to the nucleus. It is found in the nucleolus. Its subcellular location is the nucleoplasm. The protein resides in the mitochondrion. Its function is as follows. Structure-specific nuclease with 5'-flap endonuclease and 5'-3' exonuclease activities involved in DNA replication and repair. During DNA replication, cleaves the 5'-overhanging flap structure that is generated by displacement synthesis when DNA polymerase encounters the 5'-end of a downstream Okazaki fragment. It enters the flap from the 5'-end and then tracks to cleave the flap base, leaving a nick for ligation. Also involved in the long patch base excision repair (LP-BER) pathway, by cleaving within the apurinic/apyrimidinic (AP) site-terminated flap. Acts as a genome stabilization factor that prevents flaps from equilibrating into structures that lead to duplications and deletions. Also possesses 5'-3' exonuclease activity on nicked or gapped double-stranded DNA, and exhibits RNase H activity. Also involved in replication and repair of rDNA and in repairing mitochondrial DNA. This is Flap endonuclease 1 from Macaca fascicularis (Crab-eating macaque).